We begin with the raw amino-acid sequence, 124 residues long: Urease subunit beta (124 aa).

It belongs to the urease beta subunit family. As to quaternary structure, heterotrimer of UreA (gamma), UreB (beta) and UreC (alpha) subunits. Three heterotrimers associate to form the active enzyme.

The protein resides in the cytoplasm. The enzyme catalyses urea + 2 H2O + H(+) = hydrogencarbonate + 2 NH4(+). The protein operates within nitrogen metabolism; urea degradation; CO(2) and NH(3) from urea (urease route): step 1/1. The protein is Urease subunit beta of Bacillus velezensis (strain DSM 23117 / BGSC 10A6 / LMG 26770 / FZB42) (Bacillus amyloliquefaciens subsp. plantarum).